The primary structure comprises 227 residues: E3 ubiquitin-protein ligase ZNRF1 (227 aa).

Residues 1-42 are disordered; that stretch reads MGGKQSTAARSRGPFPGVSTDDSAVPPPGGAPHFGHYRTGGG. The N-myristoyl glycine moiety is linked to residue G2. Positions 2–10 are required for endosomal and lysosomal localization and myristoylation; sequence GGKQSTAAR. A phosphoserine mark is found at S50, S52, and S53. Residues 65–105 are disordered; that stretch reads GGVPFSLYTPASRGTGDSERAPGGGGSTSDSTYAHGNGYQE. The residue at position 103 (Y103) is a Phosphotyrosine. The residue at position 123 (S123) is a Phosphoserine. An RING-type; atypical zinc finger spans residues 184–225; sequence CVICLEELLQGDTIARLPCLCIYHKSCIDSWFEVNRSCPEHP.

In terms of assembly, interacts with AKT1, GLUL and TUBB2A. Interacts with ZNRF2. Interacts (via its RING domain) with UBE2N. Interacts (when phosphorylated) with YWHAE. N-myristoylation targets ZNRF1 to intracellular membranes. In terms of processing, phosphorylated by SRC at Tyr-103; leading to 'Lys-63'-linked ubiquitination of TLR3, lysosomal trafficking and degradation.

It is found in the endosome. The protein resides in the lysosome. It localises to the membrane. Its subcellular location is the cytoplasmic vesicle. The protein localises to the secretory vesicle. It is found in the synaptic vesicle membrane. The enzyme catalyses S-ubiquitinyl-[E2 ubiquitin-conjugating enzyme]-L-cysteine + [acceptor protein]-L-lysine = [E2 ubiquitin-conjugating enzyme]-L-cysteine + N(6)-ubiquitinyl-[acceptor protein]-L-lysine.. The protein operates within protein modification; protein ubiquitination. In terms of biological role, E3 ubiquitin-protein ligase that plays a role in different processes including cell differentiation, receptor recycling or regulation of inflammation. Mediates the ubiquitination of AKT1 and GLUL, thereby playing a role in neuron cells differentiation. Plays a role in the establishment and maintenance of neuronal transmission and plasticity. Regulates Schwann cells differentiation by mediating ubiquitination of GLUL. Promotes neurodegeneration by mediating 'Lys-48'-linked polyubiquitination and subsequent degradation of AKT1 in axons: degradation of AKT1 prevents AKT1-mediated phosphorylation of GSK3B, leading to GSK3B activation and phosphorylation of DPYSL2/CRMP2 followed by destabilization of microtubule assembly in axons. Ubiquitinates the Na(+)/K(+) ATPase alpha-1 subunit/ATP1A1 and thereby influences its endocytosis and/or degradation. Controls ligand-induced EGFR signaling via mediating receptor ubiquitination and recruitment of the ESCRT machinery. Acts as a negative feedback mechanism controlling TLR3 trafficking by mediating TLR3 'Lys-63'-linked polyubiquitination to reduce type I IFN production. Modulates inflammation by promoting caveolin-1/CAV1 ubiquitination and degradation to regulate TLR4-activated immune response. The chain is E3 ubiquitin-protein ligase ZNRF1 (Znrf1) from Mus musculus (Mouse).